We begin with the raw amino-acid sequence, 231 residues long: 2-C-methyl-D-erythritol 4-phosphate cytidylyltransferase (231 aa).

It belongs to the IspD/TarI cytidylyltransferase family. IspD subfamily.

The catalysed reaction is 2-C-methyl-D-erythritol 4-phosphate + CTP + H(+) = 4-CDP-2-C-methyl-D-erythritol + diphosphate. It functions in the pathway isoprenoid biosynthesis; isopentenyl diphosphate biosynthesis via DXP pathway; isopentenyl diphosphate from 1-deoxy-D-xylulose 5-phosphate: step 2/6. In terms of biological role, catalyzes the formation of 4-diphosphocytidyl-2-C-methyl-D-erythritol from CTP and 2-C-methyl-D-erythritol 4-phosphate (MEP). This is 2-C-methyl-D-erythritol 4-phosphate cytidylyltransferase from Fusobacterium nucleatum subsp. nucleatum (strain ATCC 25586 / DSM 15643 / BCRC 10681 / CIP 101130 / JCM 8532 / KCTC 2640 / LMG 13131 / VPI 4355).